A 337-amino-acid chain; its full sequence is Inositol 2-dehydrogenase 1 (337 aa).

The protein belongs to the Gfo/Idh/MocA family. In terms of assembly, homotetramer.

It catalyses the reaction myo-inositol + NAD(+) = scyllo-inosose + NADH + H(+). Involved in the oxidation of myo-inositol (MI) to 2-keto-myo-inositol (2KMI or 2-inosose). The chain is Inositol 2-dehydrogenase 1 from Paenarthrobacter aurescens (strain TC1).